The sequence spans 676 residues: Electrogenic aspartate/glutamate antiporter SLC25A13, mitochondrial (676 aa).

N-acetylalanine is present on Ala2. Positions 2–295 (AAAKVALTKR…TLADIERIAP (294 aa)) are regulatory N-terminal domain. The Mitochondrial intermembrane segment spans residues 2-332 (AAAKVALTKR…LLQLAESAYR (331 aa)). An N6-acetyllysine modification is found at Lys18. EF-hand domains follow at residues 51-86 (SQPN…SVLC), 87-122 (APDA…TTIH), 123-157 (QHIP…FLLE), and 158-193 (IQLE…IRPH). Ca(2+) contacts are provided by Asp66, Thr68, Asp70, Leu72, and Glu77. Residues 296-311 (LEEGMLPFNLAEAQRQ) form a linker loop domain region. Residues 322 to 613 (FLLQLAESAY…LQRWFYVDFG (292 aa)) form a carrier domain region. 3 Solcar repeats span residues 327–419 (AESA…VRDK), 427–511 (VPLL…VKAS), and 519–607 (VSPG…LQRW). Residues 333–350 (FGLGSIAGAVGATAVYPI) form a helical membrane-spanning segment. At 351–393 (DLVKTRMQNQRSTGSFVGELMYKNSFDCFKKVLRYEGFFGLYR) the chain is on the mitochondrial matrix side. An N6-acetyllysine mark is found at Lys354 and Lys373. Residues 394-413 (GLLPQLLGVAPEKAIKLTVN) traverse the membrane as a helical segment. The Mitochondrial intermembrane segment spans residues 414–436 (DFVRDKFMHKDGSVPLLAEIFAG). A helical membrane pass occupies residues 437 to 450 (GCAGGSQVIFTNPL). Topologically, residues 451-485 (EIVKIRLQVAGEITTGPRVSALSVVRDLGFFGIYK) are mitochondrial matrix. N6-methyllysine is present on Lys454. At Lys485 the chain carries N6-acetyllysine; alternate. N6-succinyllysine; alternate is present on Lys485. Residues 486–505 (GAKACFLRDIPFSAIYFPCY) traverse the membrane as a helical segment. Topologically, residues 506-524 (AHVKASFANEDGQVSPGSL) are mitochondrial intermembrane. Residues 525 to 542 (LLAGAIAGMPAASLVTPA) form a helical membrane-spanning segment. The Mitochondrial matrix segment spans residues 543–581 (DVIKTRLQVAARAGQTTYNGVTDCFRKILREEGPKALWK). The residue at position 581 (Lys581) is an N6-succinyllysine. Residues 582–601 (GVAARVFRSSPQFGVTLLTY) traverse the membrane as a helical segment. Over 602–676 (ELLQRWFYVD…STSKVTAGDS (75 aa)) the chain is Mitochondrial intermembrane. The C-terminal domain stretch occupies residues 614-676 (GVKPVGSEPV…STSKVTAGDS (63 aa)). An N6-acetyllysine modification is found at Lys663. Ser667 carries the phosphoserine modification.

The protein belongs to the mitochondrial carrier (TC 2.A.29) family. Homodimer (via N-terminus). In terms of tissue distribution, at 10.5 dpc, expressed in branchial arches, a well as in the limb and tail buds. At 13.5 dpc expression is predominant in epithelial structures and the forebrain, kidney and liver. Expression in liver is maintained into adulthood.

The protein localises to the mitochondrion inner membrane. The catalysed reaction is L-aspartate(in) + L-glutamate(out) + H(+)(out) = L-aspartate(out) + L-glutamate(in) + H(+)(in). The enzyme catalyses 3-sulfino-L-alanine(out) + L-glutamate(in) + H(+)(in) = 3-sulfino-L-alanine(in) + L-glutamate(out) + H(+)(out). It carries out the reaction 3-sulfino-L-alanine(out) + L-aspartate(in) = 3-sulfino-L-alanine(in) + L-aspartate(out). Mitochondrial electrogenic aspartate/glutamate antiporter that favors efflux of aspartate and entry of glutamate and proton within the mitochondria as part of the malate-aspartate shuttle. Also mediates the uptake of L-cysteinesulfinate (3-sulfino-L-alanine) by mitochondria in exchange of L-glutamate and proton. Can also exchange L-cysteinesulfinate with aspartate in their anionic form without any proton translocation. Lacks transport activity towards gamma-aminobutyric acid (GABA). The chain is Electrogenic aspartate/glutamate antiporter SLC25A13, mitochondrial from Mus musculus (Mouse).